We begin with the raw amino-acid sequence, 370 residues long: Putative replication factor C small subunit L478 (370 aa).

Residue 41 to 48 (GPSGSGKK) participates in ATP binding. Positions 342-353 (RNKEPEKSEKTK) are enriched in basic and acidic residues. The interval 342–370 (RNKEPEKSEKTKSKTGKLSRTNSKKTIKN) is disordered. A compositionally biased stretch (basic residues) spans 354-370 (SKTGKLSRTNSKKTIKN).

Belongs to the activator 1 small subunits family. RfcS subfamily.

In terms of biological role, part of the RFC clamp loader complex which loads the PCNA sliding clamp onto DNA. The chain is Putative replication factor C small subunit L478 from Acanthamoeba polyphaga (Amoeba).